Consider the following 182-residue polypeptide: Large ribosomal subunit protein uL6 (182 aa).

Belongs to the universal ribosomal protein uL6 family. As to quaternary structure, part of the 50S ribosomal subunit.

This protein binds to the 23S rRNA, and is important in its secondary structure. It is located near the subunit interface in the base of the L7/L12 stalk, and near the tRNA binding site of the peptidyltransferase center. The sequence is that of Large ribosomal subunit protein uL6 from Trichormus variabilis (strain ATCC 29413 / PCC 7937) (Anabaena variabilis).